A 356-amino-acid polypeptide reads, in one-letter code: S-adenosylmethionine:tRNA ribosyltransferase-isomerase (356 aa).

It belongs to the QueA family. Monomer.

The protein localises to the cytoplasm. It carries out the reaction 7-aminomethyl-7-carbaguanosine(34) in tRNA + S-adenosyl-L-methionine = epoxyqueuosine(34) in tRNA + adenine + L-methionine + 2 H(+). It functions in the pathway tRNA modification; tRNA-queuosine biosynthesis. Its function is as follows. Transfers and isomerizes the ribose moiety from AdoMet to the 7-aminomethyl group of 7-deazaguanine (preQ1-tRNA) to give epoxyqueuosine (oQ-tRNA). The polypeptide is S-adenosylmethionine:tRNA ribosyltransferase-isomerase (Shigella dysenteriae serotype 1 (strain Sd197)).